The sequence spans 79 residues: MNPKSEVLIAAVLFMLLACVQCQLTFSPDWGKRSVGGAGPGTFFETQQGNCKTSNEMLLEIFRFVQSQAQLFLDCKHRE.

The signal sequence occupies residues 1–22 (MNPKSEVLIAAVLFMLLACVQC). Pyrrolidone carboxylic acid is present on Q23. Tryptophan amide is present on W30. The propeptide occupies 34–79 (SVGGAGPGTFFETQQGNCKTSNEMLLEIFRFVQSQAQLFLDCKHRE).

The protein belongs to the AKH/HRTH/RPCH family.

Its subcellular location is the secreted. Functionally, probably causes a marked increase in hemolymph carbohydrate. The polypeptide is Adipokinetic hormone (Akh) (Drosophila melanogaster (Fruit fly)).